We begin with the raw amino-acid sequence, 66 residues long: Large ribosomal subunit protein bL35 (66 aa).

The span at 1–16 (MPKQKTHRASAKRFKR) shows a compositional bias: basic residues. The segment at 1-21 (MPKQKTHRASAKRFKRTGSGG) is disordered.

It belongs to the bacterial ribosomal protein bL35 family.

This is Large ribosomal subunit protein bL35 from Streptococcus pneumoniae serotype 2 (strain D39 / NCTC 7466).